The sequence spans 707 residues: MSQYTEKEPSVMDQESSKAAWPKPAGGYQTITGRRYGRRHAYVSFKPCMTRHERSLGRAGDDYEVLELDDVPKENTSGSSSLDQVHPALPNEPTVEKSETEISTCGPALNQSTESSPSIATVCHSEEVRETLESNTNLHNRTETEHTPAVCNVSSVQNGIMLVHTDSYDPDSKHDENGSLQLGAEAVEGGRHQKGLGRAVFELENGEAEIYADLSPSVPSLNGEISEAFEELDSAPLEKSSTADAELVHQNGQEFQRSSEDGVVRKRRQDDTDQGRQTENSTEDADCAPGHVEQNTSDRANHHGSSPEQVVRPKVRKVISSSQVDQEIGFNRHEAKQRSVQRWREALEVEECSSDDPIIKCDDYDGDHDCMFLTPTYSRVTQRETERNRVTSENGATASGRQESRDNAFWNACGEYYQLFDKDEDSSECSDGEWSASLPHRFSGTEKDQSSSDDSWETLPGKDENDPELQSDSSGPEEENQELSLQEGEQTSLEEGEIPWLQYNEVNESSSDEGNEPANEFAQPEAFMLDGNNNLEDDSSVSEDLDVDWSLFDGFADGLGVAEAISYVDPQFLTYMALEERLAQAMETALAHLESLAVDVEVANPPASKESIDGLPETLVLEDHTAIGQEQCCPICCSEYIKDDIATELPCHHFFHKPCVSIWLQKSGTCPVCRRHFPPAVIDASAAASSDPDPDASPANDNAEEAP.

The segment covering 1–10 (MSQYTEKEPS) has biased composition (basic and acidic residues). 3 disordered regions span residues 1 to 32 (MSQY…QTIT), 72 to 120 (PKEN…PSIA), and 250 to 314 (QNGQ…VRPK). An N-acetylserine modification is found at Ser2. Composition is skewed to polar residues over residues 74–83 (ENTSGSSSLD) and 109–119 (LNQSTESSPSI). The segment covering 257–276 (RSSEDGVVRKRRQDDTDQGR) has biased composition (basic and acidic residues). Polar residues predominate over residues 293–308 (EQNTSDRANHHGSSPE). 2 positions are modified to phosphoserine: Ser306 and Ser320. Ser339 is subject to Phosphoserine; by PKA. Disordered stretches follow at residues 379-405 (RVTQ…QESR) and 424-493 (EDSS…QTSL). Residues 381–390 (TQRETERNRV) are compositionally biased toward basic and acidic residues. Thr385 carries the phosphothreonine; by PKA modification. Polar residues predominate over residues 391–401 (TSENGATASGR). Phosphoserine is present on Ser430. The span at 465-481 (NDPELQSDSSGPEEENQ) shows a compositional bias: acidic residues. Residues 482–491 (ELSLQEGEQT) show a composition bias toward polar residues. The interaction with PRKAR1A, PRKAR2A and PRKAR2B stretch occupies residues 530-707 (DGNNNLEDDS…PANDNAEEAP (178 aa)). The tract at residues 549–569 (WSLFDGFADGLGVAEAISYVD) is mediates interaction with TBC1D31. The RING-type; atypical zinc-finger motif lies at 633–674 (CPICCSEYIKDDIATELPCHHFFHKPCVSIWLQKSGTCPVCR). Residues 685-701 (SAAASSDPDPDASPAND) are compositionally biased toward low complexity. The segment at 685–707 (SAAASSDPDPDASPANDNAEEAP) is disordered.

In terms of assembly, binds ubiquitin-conjugating enzymes (E2s). In vitro, interacts with the ubiquitin-conjugating enzyme, UBE2D2. The phosphorylated form interacts with PRKAR1A, PRKAR2A and PRKAR2B. Binds the catalytic subunits of cAMP-dependent protein kinase. Interacts with MFHAS1. Interacts with TBC1D31; the interaction is direct and recruits PJA2 to centrosomes.

Its subcellular location is the cytoplasm. The protein localises to the cell membrane. The protein resides in the endoplasmic reticulum membrane. It localises to the golgi apparatus membrane. It is found in the synapse. Its subcellular location is the postsynaptic density. The protein localises to the cytoskeleton. The protein resides in the microtubule organizing center. It localises to the centrosome. The enzyme catalyses S-ubiquitinyl-[E2 ubiquitin-conjugating enzyme]-L-cysteine + [acceptor protein]-L-lysine = [E2 ubiquitin-conjugating enzyme]-L-cysteine + N(6)-ubiquitinyl-[acceptor protein]-L-lysine.. It participates in protein modification; protein ubiquitination. Has E2-dependent E3 ubiquitin-protein ligase activity. Responsible for ubiquitination of cAMP-dependent protein kinase type I and type II-alpha/beta regulatory subunits and for targeting them for proteasomal degradation. Essential for PKA-mediated long-term memory processes. Through the ubiquitination of MFHAS1, positively regulates the TLR2 signaling pathway that leads to the activation of the downstream p38 and JNK MAP kinases and promotes the polarization of macrophages toward the pro-inflammatory M1 phenotype. Plays a role in ciliogenesis by ubiquitinating OFD1. This Mus musculus (Mouse) protein is E3 ubiquitin-protein ligase Praja-2 (Pja2).